Here is a 365-residue protein sequence, read N- to C-terminus: Cobalt-precorrin-5B C(1)-methyltransferase (365 aa).

The protein belongs to the CbiD family.

It catalyses the reaction Co-precorrin-5B + S-adenosyl-L-methionine = Co-precorrin-6A + S-adenosyl-L-homocysteine. It participates in cofactor biosynthesis; adenosylcobalamin biosynthesis; cob(II)yrinate a,c-diamide from sirohydrochlorin (anaerobic route): step 6/10. Catalyzes the methylation of C-1 in cobalt-precorrin-5B to form cobalt-precorrin-6A. The chain is Cobalt-precorrin-5B C(1)-methyltransferase from Polaromonas naphthalenivorans (strain CJ2).